We begin with the raw amino-acid sequence, 294 residues long: Acetyl-coenzyme A carboxylase carboxyl transferase subunit beta (294 aa).

The 270-residue stretch at 25-294 (VWTKCTSCEQ…PLVVPVDGSH (270 aa)) folds into the CoA carboxyltransferase N-terminal domain. Zn(2+) is bound by residues C29, C32, C48, and C51. The segment at 29 to 51 (CTSCEQVLYSAELERNLEVCPKC) adopts a C4-type zinc-finger fold.

This sequence belongs to the AccD/PCCB family. As to quaternary structure, acetyl-CoA carboxylase is a heterohexamer composed of biotin carboxyl carrier protein (AccB), biotin carboxylase (AccC) and two subunits each of ACCase subunit alpha (AccA) and ACCase subunit beta (AccD). Zn(2+) is required as a cofactor.

Its subcellular location is the cytoplasm. It carries out the reaction N(6)-carboxybiotinyl-L-lysyl-[protein] + acetyl-CoA = N(6)-biotinyl-L-lysyl-[protein] + malonyl-CoA. Its pathway is lipid metabolism; malonyl-CoA biosynthesis; malonyl-CoA from acetyl-CoA: step 1/1. Functionally, component of the acetyl coenzyme A carboxylase (ACC) complex. Biotin carboxylase (BC) catalyzes the carboxylation of biotin on its carrier protein (BCCP) and then the CO(2) group is transferred by the transcarboxylase to acetyl-CoA to form malonyl-CoA. In Aliivibrio fischeri (strain ATCC 700601 / ES114) (Vibrio fischeri), this protein is Acetyl-coenzyme A carboxylase carboxyl transferase subunit beta.